We begin with the raw amino-acid sequence, 615 residues long: Dihydroxy-acid dehydratase (615 aa).

Aspartate 81 contacts Mg(2+). Position 122 (cysteine 122) interacts with [2Fe-2S] cluster. The Mg(2+) site is built by aspartate 123 and lysine 124. N6-carboxylysine is present on lysine 124. Cysteine 195 contacts [2Fe-2S] cluster. Residue glutamate 491 participates in Mg(2+) binding. Residue serine 517 is the Proton acceptor of the active site.

The protein belongs to the IlvD/Edd family. In terms of assembly, homodimer. It depends on [2Fe-2S] cluster as a cofactor. Mg(2+) serves as cofactor.

The enzyme catalyses (2R)-2,3-dihydroxy-3-methylbutanoate = 3-methyl-2-oxobutanoate + H2O. It catalyses the reaction (2R,3R)-2,3-dihydroxy-3-methylpentanoate = (S)-3-methyl-2-oxopentanoate + H2O. Its pathway is amino-acid biosynthesis; L-isoleucine biosynthesis; L-isoleucine from 2-oxobutanoate: step 3/4. The protein operates within amino-acid biosynthesis; L-valine biosynthesis; L-valine from pyruvate: step 3/4. Functions in the biosynthesis of branched-chain amino acids. Catalyzes the dehydration of (2R,3R)-2,3-dihydroxy-3-methylpentanoate (2,3-dihydroxy-3-methylvalerate) into 2-oxo-3-methylpentanoate (2-oxo-3-methylvalerate) and of (2R)-2,3-dihydroxy-3-methylbutanoate (2,3-dihydroxyisovalerate) into 2-oxo-3-methylbutanoate (2-oxoisovalerate), the penultimate precursor to L-isoleucine and L-valine, respectively. The sequence is that of Dihydroxy-acid dehydratase from Shewanella piezotolerans (strain WP3 / JCM 13877).